Here is a 203-residue protein sequence, read N- to C-terminus: Ras-like protein family member 10A (203 aa).

The interval 1 to 203 (MGGSLRVAVL…ALHPARCSLM (203 aa)) is small GTPase-like. 11 to 18 (GAPGVGKT) contacts GTP. An Effector region motif is present at residues 33–42 (HRPTDGPRLY). Residues 59–62 (DGDV) and 129–132 (NKRD) each bind GTP. Cys200 carries the post-translational modification Cysteine methyl ester. Cys200 is lipidated: S-farnesyl cysteine. Positions 201–203 (SLM) are cleaved as a propeptide — removed in mature form.

The protein belongs to the small GTPase superfamily. Ras family. Post-translationally, isoprenylation is essential for nucleolar localization, and the proliferation-inhibiting activity of RASL10A. In terms of tissue distribution, expression appears to be strictly limited to the central nervous system.

Its subcellular location is the cell membrane. It localises to the nucleus. The protein localises to the nucleolus. It catalyses the reaction GTP + H2O = GDP + phosphate + H(+). Potent inhibitor of cellular proliferation. The chain is Ras-like protein family member 10A (RASL10A) from Homo sapiens (Human).